Consider the following 213-residue polypeptide: MRSGVIAQKVGMTRVYNDAGEHVPVTVLRMDGCQVVATRTVEKNGYTAVQLGAGQAKVKNTSKAMRGNFAVANVEPKAKVAEFRVSEDQLLEIGTEIKAGHFAAGQLVDVTGTTIGKGFAGAMKRHGFGGLRATHGVSVSHRSHGSTGSRQDPGKVFKNKKMAGHMGQTRVTTQNLEVVSTDEDRGLILIKGAVPGSKGAWIIVRDAVKSAAK.

At Gln151 the chain carries N5-methylglutamine.

It belongs to the universal ribosomal protein uL3 family. As to quaternary structure, part of the 50S ribosomal subunit. Forms a cluster with proteins L14 and L19. Methylated by PrmB.

Functionally, one of the primary rRNA binding proteins, it binds directly near the 3'-end of the 23S rRNA, where it nucleates assembly of the 50S subunit. In Rhizobium leguminosarum bv. trifolii (strain WSM2304), this protein is Large ribosomal subunit protein uL3.